The chain runs to 34 residues: Cytochrome b6-f complex subunit 5 (34 aa).

The chain crosses the membrane as a helical span at residues 5 to 25; the sequence is LLSGIVLGLVPVTLAGLFVTA.

It belongs to the PetG family. The 4 large subunits of the cytochrome b6-f complex are cytochrome b6, subunit IV (17 kDa polypeptide, PetD), cytochrome f and the Rieske protein, while the 4 small subunits are PetG, PetL, PetM and PetN. The complex functions as a dimer.

The protein resides in the plastid. The protein localises to the chloroplast thylakoid membrane. Its function is as follows. Component of the cytochrome b6-f complex, which mediates electron transfer between photosystem II (PSII) and photosystem I (PSI), cyclic electron flow around PSI, and state transitions. PetG is required for either the stability or assembly of the cytochrome b6-f complex. This chain is Cytochrome b6-f complex subunit 5, found in Oltmannsiellopsis viridis (Marine flagellate).